Consider the following 792-residue polypeptide: Alpha-1,6-mannosylglycoprotein 6-beta-N-acetylglucosaminyltransferase B (792 aa).

The Cytoplasmic portion of the chain corresponds to 1 to 24 (MITVNPDGKIMVRRCLVTLRPFRL). A helical; Signal-anchor for type II membrane protein membrane pass occupies residues 25–45 (FVLGIGFFTLCFLMTSLGGQF). Residues 46–792 (SARRLGDSPF…GQVALCQGCL (747 aa)) are Lumenal-facing. Asn-127 carries N-linked (GlcNAc...) asparagine glycosylation. Disulfide bonds link Cys-157/Cys-195, Cys-168/Cys-208, Cys-184/Cys-353, Cys-387/Cys-644, Cys-700/Cys-775, Cys-704/Cys-777, Cys-711/Cys-764, Cys-732/Cys-753, and Cys-788/Cys-791.

Belongs to the glycosyltransferase 18 family. Mn(2+) serves as cofactor. In terms of tissue distribution, predominantly expressed in brain. Expressed in all areas of the adult and fetal brain. Also expressed at much lower levels in testis, spleen and thymus.

The protein localises to the golgi apparatus membrane. It carries out the reaction N(4)-{beta-D-GlcNAc-(1-&gt;2)-[beta-D-GlcNAc-(1-&gt;4)]-alpha-D-Man-(1-&gt;3)-[beta-D-GlcNAc-(1-&gt;2)-alpha-D-Man-(1-&gt;6)]-beta-D-Man-(1-&gt;4)-beta-D-GlcNAc-(1-&gt;4)-beta-D-GlcNAc}-L-asparaginyl-[protein] + UDP-N-acetyl-alpha-D-glucosamine = N(4)-{beta-D-GlcNAc-(1-&gt;2)-[beta-D-GlcNAc-(1-&gt;4)]-alpha-D-Man-(1-&gt;3)-[beta-D-GlcNAc-(1-&gt;2)-[beta-D-GlcNAc-(1-&gt;6)]-alpha-D-Man-(1-&gt;6)]-beta-D-Man-(1-&gt;4)-beta-D-GlcNAc-(1-&gt;4)-beta-D-GlcNAc}-L-asparaginyl-[protein] + UDP + H(+). It catalyses the reaction 3-O-[N-acetyl-beta-D-glucosaminyl-(1-&gt;2)-alpha-D-mannosyl]-L-seryl-[protein] + UDP-N-acetyl-alpha-D-glucosamine = O(3)-{N-acetyl-beta-D-glucosaminyl-(1-&gt;2)-[N-acetyl-beta-D-glucosaminyl-(1-&gt;6)]-alpha-D-mannosyl}-L-seryl-[protein] + UDP + H(+). The catalysed reaction is 3-O-[N-acetyl-beta-D-glucosaminyl-(1-&gt;2)-alpha-D-mannosyl]-L-threonyl-[protein] + UDP-N-acetyl-alpha-D-glucosamine = O(3)-{N-acetyl-beta-D-glucosaminyl-(1-&gt;2)-[N-acetyl-beta-D-glucosaminyl-(1-&gt;6)]-alpha-D-mannosyl}-L-threonyl-[protein] + UDP + H(+). It functions in the pathway protein modification; protein glycosylation. Functionally, glycosyltransferase that acts on alpha-linked mannose of N-glycans and O-mannosyl glycans. Catalyzes the transfer of N-acetylglucosamine (GlcNAc) to the beta 1-6 linkage of the mannose residue of GlcNAc-beta1,2-Man-alpha on both the alpha1,3- and alpha1,6-linked mannose arms in the core structure of N-glycan. Also acts on the GlcNAc-beta1,2-Man-alpha1-Ser/Thr moiety, forming a 2,6-branched structure in brain O-mannosyl glycan. Plays an active role in modulating integrin and laminin-dependent adhesion and migration of neuronal cells via its activity in the O-mannosyl glycan pathway. In Homo sapiens (Human), this protein is Alpha-1,6-mannosylglycoprotein 6-beta-N-acetylglucosaminyltransferase B (MGAT5B).